Reading from the N-terminus, the 519-residue chain is Na(+)/H(+) exchange regulatory cofactor NHE-RF3 (519 aa).

Residues 9–90 (ECKLSKQEGQ…SVTLLVLDGD (82 aa)) form the PDZ 1 domain. 6 positions are modified to phosphoserine: S108, S148, S192, S250, S334, and S348. 2 PDZ domains span residues 134–215 (RLCY…VDKE) and 243–323 (IVEM…VDKE). Positions 347 to 374 (GSVKEAPAPTPTSLEVSSPPDTTEEVDH) are disordered. Positions 357–367 (PTSLEVSSPPD) are enriched in polar residues. Positions 378–458 (LCRLAKGENG…NVTLLVCGKK (81 aa)) constitute a PDZ 4 domain. The residue at position 451 (T451) is a Phosphothreonine. The segment at 479 to 519 (DTPPDSKEGIVVESNHDSHMAKERAHSTASHSSSNSEDTEM) is disordered. Positions 482–504 (PDSKEGIVVESNHDSHMAKERAH) are enriched in basic and acidic residues. 6 positions are modified to phosphoserine: S492, S508, S510, S511, S512, and S514. Residues 505–519 (STASHSSSNSEDTEM) are compositionally biased toward low complexity.

It belongs to the NHER family. As to quaternary structure, interacts with PDZK1IP1 and ABCC2. Interacts (via PDZ domains 1 and 3) with SCARB1 (C-terminal domain). Forms a heterodimeric complex with NHERF1. Interacts with AKAP2, BCR, CFTR, SLC22A12, SLC22A4, SLC22A5, NHERF2 and SLC17A1. Component of a complex, composed of PDZK1, SYNGAP1, KLHL17 and NMDA receptors. Interacts (via PDZ1 domain) directly with KLHL17; the interaction is important for integrity of actin cytoskeleton structures in neurons. Interacts (via the first PDZ domain) with PTGIR (via non-isoprenylated C-terminus). Interacts (via C-terminal PDZ domain) with SLC26A6 (via C-terminal domain). Interacts (via C-terminal PDZ domain) with SLC9A3 (via C-terminal domain). Interacts (via PDZ domains 1 and 3) with SLC5A8 (via PDZ-binding motif); interaction increases nicotinate transport activity of SLC5A8. In terms of tissue distribution, expression is limited to epithelial cells. Expressed in the kidney (brush border of proximal tubule), pancreas, liver, and small intestine. Expressed at a lower level in the adrenal cortex, testis and stomach. Overexpressed in breast, renal and lung carcinomas.

The protein resides in the membrane. The protein localises to the cell membrane. In terms of biological role, a scaffold protein that connects plasma membrane proteins and regulatory components, regulating their surface expression in epithelial cells apical domains. May be involved in the coordination of a diverse range of regulatory processes for ion transport and second messenger cascades. In complex with NHERF1, may cluster proteins that are functionally dependent in a mutual fashion and modulate the trafficking and the activity of the associated membrane proteins. May play a role in the cellular mechanisms associated with multidrug resistance through its interaction with ABCC2 and PDZK1IP1. May potentiate the CFTR chloride channel activity. Required for normal cell-surface expression of SCARB1. Plays a role in maintaining normal plasma cholesterol levels via its effects on SCARB1. Plays a role in the normal localization and function of the chloride-anion exchanger SLC26A6 to the plasma membrane in the brush border of the proximal tubule of the kidney. May be involved in the regulation of proximal tubular Na(+)-dependent inorganic phosphate cotransport therefore playing an important role in tubule function. The polypeptide is Na(+)/H(+) exchange regulatory cofactor NHE-RF3 (PDZK1) (Homo sapiens (Human)).